A 253-amino-acid polypeptide reads, in one-letter code: Uridylate kinase (253 aa).

26–29 lines the ATP pocket; the sequence is KLSG. Gly68 lines the UMP pocket. Residues Gly69 and Arg73 each coordinate ATP. UMP contacts are provided by residues Asp88 and 149 to 156; that span reads TGNPFFTT. 3 residues coordinate ATP: Thr176, Tyr182, and Asp185.

It belongs to the UMP kinase family. Homohexamer.

The protein resides in the cytoplasm. It carries out the reaction UMP + ATP = UDP + ADP. It participates in pyrimidine metabolism; CTP biosynthesis via de novo pathway; UDP from UMP (UMPK route): step 1/1. Its activity is regulated as follows. Inhibited by UTP. Its function is as follows. Catalyzes the reversible phosphorylation of UMP to UDP. The protein is Uridylate kinase of Chromohalobacter salexigens (strain ATCC BAA-138 / DSM 3043 / CIP 106854 / NCIMB 13768 / 1H11).